The chain runs to 307 residues: Ribulose bisphosphate carboxylase/oxygenase activase, chloroplastic (307 aa).

The N-terminal 46 residues, Met1–Ala46, are a transit peptide targeting the chloroplast. Residue Gly73 to Thr80 coordinates ATP.

It belongs to the CbxX/CfxQ family. In terms of assembly, forms homooligomers. Forms heterohexameric rings with the plastid-encoded Rca subunit consisting of 3 of each nuclear- and plastidial-encoded subunits that alternate in the ring.

The protein resides in the plastid. The protein localises to the chloroplast. In terms of biological role, required for the expression of ribulose 1,5-bisphosphate carboxylase/oxygenase (RuBisCo). ATPase involved in the activation of red-type RuBisCo, which tends to form inactive complexes with its substrate ribulose 1,5-bisphosphate (RuBP). Catalyzes the release of RuBP from inhibited RuBisCo in an ATP-dependent manner. Activation of RuBisCO involves the ATP-dependent carboxylation of the epsilon-amino group of lysine leading to a carbamate structure. The nuclear-encoded subunit plays a more critical role in activase function than the plastidial-encoded subunit. The protein is Ribulose bisphosphate carboxylase/oxygenase activase, chloroplastic of Cyanidioschyzon merolae (strain NIES-3377 / 10D) (Unicellular red alga).